A 681-amino-acid polypeptide reads, in one-letter code: DNA-directed RNA polymerase subunit beta' (681 aa).

Zn(2+)-binding residues include cysteine 69, cysteine 71, cysteine 87, and cysteine 90. Mg(2+)-binding residues include aspartate 490, aspartate 492, and aspartate 494.

This sequence belongs to the RNA polymerase beta' chain family. RpoC1 subfamily. As to quaternary structure, in plastids the minimal PEP RNA polymerase catalytic core is composed of four subunits: alpha, beta, beta', and beta''. When a (nuclear-encoded) sigma factor is associated with the core the holoenzyme is formed, which can initiate transcription. The cofactor is Mg(2+). Requires Zn(2+) as cofactor.

The protein resides in the plastid. Its subcellular location is the chloroplast. The catalysed reaction is RNA(n) + a ribonucleoside 5'-triphosphate = RNA(n+1) + diphosphate. Functionally, DNA-dependent RNA polymerase catalyzes the transcription of DNA into RNA using the four ribonucleoside triphosphates as substrates. The protein is DNA-directed RNA polymerase subunit beta' of Liriodendron tulipifera (Tuliptree).